The sequence spans 466 residues: ATP synthase subunit beta (466 aa).

148 to 155 is a binding site for ATP; that stretch reads GGAGVGKT.

Belongs to the ATPase alpha/beta chains family. As to quaternary structure, F-type ATPases have 2 components, CF(1) - the catalytic core - and CF(0) - the membrane proton channel. CF(1) has five subunits: alpha(3), beta(3), gamma(1), delta(1), epsilon(1). CF(0) has three main subunits: a(1), b(2) and c(9-12). The alpha and beta chains form an alternating ring which encloses part of the gamma chain. CF(1) is attached to CF(0) by a central stalk formed by the gamma and epsilon chains, while a peripheral stalk is formed by the delta and b chains.

Its subcellular location is the cell inner membrane. The enzyme catalyses ATP + H2O + 4 H(+)(in) = ADP + phosphate + 5 H(+)(out). Its function is as follows. Produces ATP from ADP in the presence of a proton gradient across the membrane. The catalytic sites are hosted primarily by the beta subunits. The sequence is that of ATP synthase subunit beta from Xylella fastidiosa (strain 9a5c).